Consider the following 315-residue polypeptide: Protein rlx (315 aa).

The segment at 263–315 (TEQLKQRRVERAQETKQAHSKISSRDTRESENQRERAKGNNIRIERGDEGLSR) is disordered.

Its function is as follows. This protein is probably required for relaxation complex formation and plasmid mobilization by conjugative plasmids. This Staphylococcus aureus protein is Protein rlx (rlx).